The following is a 463-amino-acid chain: Probable Xaa-Pro aminopeptidase pepP (463 aa).

Positions 259, 270, 393, and 433 each coordinate Mn(2+).

The protein belongs to the peptidase M24B family. The cofactor is Mn(2+).

It catalyses the reaction Release of any N-terminal amino acid, including proline, that is linked to proline, even from a dipeptide or tripeptide.. Catalyzes the removal of a penultimate prolyl residue from the N-termini of peptides. The polypeptide is Probable Xaa-Pro aminopeptidase pepP (pepP) (Pyrenophora tritici-repentis (strain Pt-1C-BFP) (Wheat tan spot fungus)).